Reading from the N-terminus, the 168-residue chain is Xanthine-guanine phosphoribosyltransferase (168 aa).

5-phospho-alpha-D-ribose 1-diphosphate-binding positions include 46–47 (RG) and 101–109 (DDLVDSGVT). Residue D102 coordinates Mg(2+). Position 105 (D105) interacts with guanine. Xanthine is bound by residues D105 and V148. Residues 105–109 (DSGVT) and 147–148 (WV) each bind GMP.

Belongs to the purine/pyrimidine phosphoribosyltransferase family. XGPT subfamily. In terms of assembly, homotetramer. The cofactor is Mg(2+).

Its subcellular location is the cell inner membrane. It carries out the reaction GMP + diphosphate = guanine + 5-phospho-alpha-D-ribose 1-diphosphate. The enzyme catalyses XMP + diphosphate = xanthine + 5-phospho-alpha-D-ribose 1-diphosphate. The catalysed reaction is IMP + diphosphate = hypoxanthine + 5-phospho-alpha-D-ribose 1-diphosphate. The protein operates within purine metabolism; GMP biosynthesis via salvage pathway; GMP from guanine: step 1/1. It functions in the pathway purine metabolism; XMP biosynthesis via salvage pathway; XMP from xanthine: step 1/1. Purine salvage pathway enzyme that catalyzes the transfer of the ribosyl-5-phosphate group from 5-phospho-alpha-D-ribose 1-diphosphate (PRPP) to the N9 position of the 6-oxopurines guanine and xanthine to form the corresponding ribonucleotides GMP (guanosine 5'-monophosphate) and XMP (xanthosine 5'-monophosphate), with the release of PPi. To a lesser extent, also acts on hypoxanthine. The protein is Xanthine-guanine phosphoribosyltransferase of Gluconobacter oxydans (strain 621H) (Gluconobacter suboxydans).